The following is a 345-amino-acid chain: Uroporphyrinogen decarboxylase (345 aa).

Residues 28 to 32 (RQAGR), Asp-77, Tyr-153, Ser-208, and His-322 contribute to the substrate site.

The protein belongs to the uroporphyrinogen decarboxylase family. In terms of assembly, homodimer.

The protein resides in the cytoplasm. It carries out the reaction uroporphyrinogen III + 4 H(+) = coproporphyrinogen III + 4 CO2. The protein operates within porphyrin-containing compound metabolism; protoporphyrin-IX biosynthesis; coproporphyrinogen-III from 5-aminolevulinate: step 4/4. Catalyzes the decarboxylation of four acetate groups of uroporphyrinogen-III to yield coproporphyrinogen-III. The chain is Uroporphyrinogen decarboxylase from Solibacter usitatus (strain Ellin6076).